The sequence spans 728 residues: 1,4-alpha-glucan branching enzyme GlgB (728 aa).

Residue D405 is the Nucleophile of the active site. Residue E458 is the Proton donor of the active site.

This sequence belongs to the glycosyl hydrolase 13 family. GlgB subfamily. In terms of assembly, monomer.

The catalysed reaction is Transfers a segment of a (1-&gt;4)-alpha-D-glucan chain to a primary hydroxy group in a similar glucan chain.. It participates in glycan biosynthesis; glycogen biosynthesis. Its function is as follows. Catalyzes the formation of the alpha-1,6-glucosidic linkages in glycogen by scission of a 1,4-alpha-linked oligosaccharide from growing alpha-1,4-glucan chains and the subsequent attachment of the oligosaccharide to the alpha-1,6 position. This Klebsiella pneumoniae subsp. pneumoniae (strain ATCC 700721 / MGH 78578) protein is 1,4-alpha-glucan branching enzyme GlgB.